We begin with the raw amino-acid sequence, 460 residues long: Polygalacturonase (460 aa).

A signal peptide spans Met1–Gly26. Residue Asn280 is glycosylated (N-linked (GlcNAc...) asparagine). Asp292 acts as the Proton donor in catalysis. His315 is a catalytic residue. N-linked (GlcNAc...) asparagine glycosylation occurs at Asn421.

Belongs to the glycosyl hydrolase 28 family.

It localises to the secreted. It is found in the cell wall. It catalyses the reaction (1,4-alpha-D-galacturonosyl)n+m + H2O = (1,4-alpha-D-galacturonosyl)n + (1,4-alpha-D-galacturonosyl)m.. In terms of biological role, acts in concert with the pectinesterase, in the ripening process. Is involved in cell wall metabolism, specifically in polyuronide degradation. In Malus domestica (Apple), this protein is Polygalacturonase.